Consider the following 269-residue polypeptide: MAWVPAESAVEELMPRLLPVEPCDLTEGFDPSVPPRTPQEYLRRVQIEAAQCPDVVVAQIDPKKLKRKQSVNISLSGCQPAPEGYSPTLQWQQQQVAHFSTVRQSVHKHRNHWKSQQLDSNVAMPKSEDEEGWKKFCLGERLCAEGATGPSTEESPGIDYVQVGFPPLLSIVSRMNQTTITSVLEYLSNWFGERDFTPELGRWFYALLACLEKPLLPEAHSLIRQLARRCSEVRLLVGSKDDERVPALNLLICLVSRYFDQRDLADEPS.

Residues Ser-70 and Ser-155 each carry the phosphoserine modification.

Belongs to the gemin-2 family. Monomer. Part of the core SMN complex that contains SMN1, GEMIN2/SIP1, DDX20/GEMIN3, GEMIN4, GEMIN5, GEMIN6, GEMIN7, GEMIN8 and STRAP/UNRIP. Part of the SMN-Sm complex that contains SMN1, GEMIN2/SIP1, DDX20/GEMIN3, GEMIN4, GEMIN5, GEMIN6, GEMIN7, GEMIN8, STRAP/UNRIP and the Sm proteins SNRPB, SNRPD1, SNRPD2, SNRPD3, SNRPE, SNRPF and SNRPG. Interacts with GEMIN5; the interaction is direct. Interacts (via C-terminus) with SMN1; the interaction is direct. Interacts with SNRPD1; the interaction is direct. Interacts with SNRPD2; the interaction is direct. Interacts (via N-terminus) with SNRPF; the interaction is direct. Interacts (via N-terminus) with SNRPE; the interaction is direct. Interacts (via N-terminus) with SNRPG; the interaction is direct.

Its subcellular location is the nucleus. The protein resides in the gem. It localises to the cytoplasm. Its function is as follows. The SMN complex catalyzes the assembly of small nuclear ribonucleoproteins (snRNPs), the building blocks of the spliceosome, and thereby plays an important role in the splicing of cellular pre-mRNAs. Most spliceosomal snRNPs contain a common set of Sm proteins SNRPB, SNRPD1, SNRPD2, SNRPD3, SNRPE, SNRPF and SNRPG that assemble in a heptameric protein ring on the Sm site of the small nuclear RNA to form the core snRNP (Sm core). In the cytosol, the Sm proteins SNRPD1, SNRPD2, SNRPE, SNRPF and SNRPG (5Sm) are trapped in an inactive 6S pICln-Sm complex by the chaperone CLNS1A that controls the assembly of the core snRNP. To assemble core snRNPs, the SMN complex accepts the trapped 5Sm proteins from CLNS1A. Binding of snRNA inside 5Sm ultimately triggers eviction of the SMN complex, thereby allowing binding of SNRPD3 and SNRPB to complete assembly of the core snRNP. Within the SMN complex, GEMIN2 constrains the conformation of 5Sm, thereby promoting 5Sm binding to snRNA containing the snRNP code (a nonameric Sm site and a 3'-adjacent stem-loop), thus preventing progression of assembly until a cognate substrate is bound. The protein is Gem-associated protein 2 of Mus musculus (Mouse).